Reading from the N-terminus, the 95-residue chain is Small ribosomal subunit protein bS18 (95 aa).

The protein belongs to the bacterial ribosomal protein bS18 family. Part of the 30S ribosomal subunit. Forms a tight heterodimer with protein bS6.

Functionally, binds as a heterodimer with protein bS6 to the central domain of the 16S rRNA, where it helps stabilize the platform of the 30S subunit. In Acidiphilium cryptum (strain JF-5), this protein is Small ribosomal subunit protein bS18.